We begin with the raw amino-acid sequence, 153 residues long: Histone H2B.10 (153 aa).

2 stretches are compositionally biased toward basic and acidic residues: residues 1 to 28 (MAPKAEKKPAAKKPAEEEPAAEKAEKAL) and 36 to 53 (EKRLPAGKAEKSSGEGKK). A disordered region spans residues 1 to 61 (MAPKAEKKPA…KKAGRKKAKK (61 aa)). Residues Lys-7 and Lys-37 each carry the N6-acetyllysine modification. Lys-149 is covalently cross-linked (Glycyl lysine isopeptide (Lys-Gly) (interchain with G-Cter in ubiquitin)).

It belongs to the histone H2B family. The nucleosome is a histone octamer containing two molecules each of H2A, H2B, H3 and H4 assembled in one H3-H4 heterotetramer and two H2A-H2B heterodimers. The octamer wraps approximately 147 bp of DNA. Can be acetylated to form H2BK6ac and H2BK33ac. In terms of processing, monoubiquitinated by BRE1 to form H2BK143ub1 and deubiquitinated by UBP26. Required for heterochromatic histone H3 di- and trimethylation at H3K4me. May give a specific tag for epigenetic transcriptional activation.

It is found in the nucleus. It localises to the chromosome. Core component of nucleosome. Nucleosomes wrap and compact DNA into chromatin, limiting DNA accessibility to the cellular machineries which require DNA as a template. Histones thereby play a central role in transcription regulation, DNA repair, DNA replication and chromosomal stability. DNA accessibility is regulated via a complex set of post-translational modifications of histones, also called histone code, and nucleosome remodeling. The chain is Histone H2B.10 (H2B.10) from Oryza sativa subsp. japonica (Rice).